A 135-amino-acid chain; its full sequence is UPF0299 membrane protein YE2790 (135 aa).

A run of 4 helical transmembrane segments spans residues 4-24, 30-50, 63-83, and 93-113; these read VTSL…CLWA, LLLP…FALL, GCHL…VGVM, and FGPI…VVGY.

It belongs to the UPF0299 family.

Its subcellular location is the cell inner membrane. The protein is UPF0299 membrane protein YE2790 of Yersinia enterocolitica serotype O:8 / biotype 1B (strain NCTC 13174 / 8081).